The following is a 147-amino-acid chain: Acidic phospholipase A2 1 (147 aa).

The first 19 residues, 1–19 (MNPAHLLVLAAVCVSLLGA), serve as a signal peptide directing secretion. A propeptide spanning residues 20–27 (AIVPPQPL) is cleaved from the precursor. 7 disulfide bridges follow: Cys-38-Cys-99, Cys-54-Cys-146, Cys-56-Cys-72, Cys-71-Cys-127, Cys-78-Cys-120, Cys-88-Cys-113, and Cys-106-Cys-118. Positions 55, 57, and 59 each coordinate Ca(2+). His-75 is a catalytic residue. Residue Asp-76 coordinates Ca(2+). Asp-121 is an active-site residue.

Belongs to the phospholipase A2 family. Group I subfamily. D49 sub-subfamily. Ca(2+) serves as cofactor. In terms of tissue distribution, expressed by the venom gland.

The protein localises to the secreted. It carries out the reaction a 1,2-diacyl-sn-glycero-3-phosphocholine + H2O = a 1-acyl-sn-glycero-3-phosphocholine + a fatty acid + H(+). In terms of biological role, PLA2 catalyzes the calcium-dependent hydrolysis of the 2-acyl groups in 3-sn-phosphoglycerides. The polypeptide is Acidic phospholipase A2 1 (Bungarus flaviceps flaviceps (Red-headed krait)).